A 375-amino-acid chain; its full sequence is N-acetyldiaminopimelate deacetylase (375 aa).

Asp69 is an active-site residue. Glu128 acts as the Proton acceptor in catalysis.

This sequence belongs to the peptidase M20A family. N-acetyldiaminopimelate deacetylase subfamily.

It catalyses the reaction N-acetyl-(2S,6S)-2,6-diaminopimelate + H2O = (2S,6S)-2,6-diaminopimelate + acetate. The protein operates within amino-acid biosynthesis; L-lysine biosynthesis via DAP pathway; LL-2,6-diaminopimelate from (S)-tetrahydrodipicolinate (acetylase route): step 3/3. Functionally, catalyzes the conversion of N-acetyl-diaminopimelate to diaminopimelate and acetate. The sequence is that of N-acetyldiaminopimelate deacetylase from Streptococcus suis (strain 05ZYH33).